The primary structure comprises 918 residues: Interleukin-6 receptor subunit beta (918 aa).

The N-terminal stretch at 1–22 (MLTLQTWLVQALFIFLTTESTG) is a signal peptide. Over 23-619 (ELLDPCGYIS…TPKFAQGEIE (597 aa)) the chain is Extracellular. Positions 26 to 120 (DPCGYISPES…LEQNVYGITI (95 aa)) constitute an Ig-like C2-type domain. Cystine bridges form between cysteine 28–cysteine 54 and cysteine 48–cysteine 103. Asparagine 43, asparagine 83, and asparagine 131 each carry an N-linked (GlcNAc...) asparagine glycan. 5 Fibronectin type-III domains span residues 125-216 (PPEK…NFDP), 224-324 (PPHN…TYED), 329-424 (APSF…FQAT), 426-517 (PVMD…LKQA), and 518-613 (PPSK…TPKF). Cysteine 134 and cysteine 144 are joined by a disulfide. Asparagine 157 is a glycosylation site (N-linked (GlcNAc...) asparagine). Cysteine 172 and cysteine 182 form a disulfide bridge. Residue asparagine 227 is glycosylated (N-linked (GlcNAc...) asparagine). The short motif at 310-314 (WSDWS) is the WSXWS motif element. N-linked (GlcNAc...) asparagine glycosylation is found at asparagine 379 and asparagine 383. Asparagine 390 carries an N-linked (GlcNAc...) (complex) asparagine glycan. Cysteine 458 and cysteine 466 are oxidised to a cystine. N-linked (GlcNAc...) asparagine glycosylation is found at asparagine 553 and asparagine 564. A helical membrane pass occupies residues 620-641 (AIVVPVCLAFLLTTLLGVLFCF). At 642–918 (NKRDLIKKHI…TVRQGGYMPQ (277 aa)) the chain is on the cytoplasmic side. The Box 1 motif signature appears at 651-659 (IWPNVPDPS). Disordered stretches follow at residues 660 to 681 (KSHI…SKDQ) and 722 to 758 (EGHS…STVQ). A phosphoserine mark is found at serine 661 and serine 667. The span at 731–755 (SSCMSSSRPSISSSDENESSQNTSS) shows a compositional bias: low complexity. 4 positions are modified to phosphoserine: serine 782, serine 789, serine 829, and serine 839.

The protein belongs to the type I cytokine receptor family. Type 2 subfamily. In terms of assembly, component of a hexamer of two molecules each of IL6, IL6R and IL6ST; associates with the complex IL6:IL6R but does not interact with IL6. Forms heterodimers composed of LIFR and IL6ST (type I OSM receptor) which are activated by LIF and OSM. Also forms heterodimers composed of OSMR and IL6ST (type II receptor) which are activated by OSM but not by LIF. Component of a receptor complex composed of IL6ST/GP130, IL27RA/WSX1 and CNTFR which interacts with the neuroprotective peptide humanin. Interacts with HCK. Interacts with INPP5D/SHIP1. Interacts with SRC and YES. Interacts with ARMH4; this interaction prevents IL6ST protein homodimerization and bridges ARMH4 with IL6R and STAT3 and therefore inhibits phosphorylation of STAT3 at 'Tyr-705'. As to quaternary structure, (Microbial infection) The homodimer binds two molecules of herpes virus 8/HHV-8 protein vIL-6. In terms of processing, phosphorylation of Ser-782 down-regulates cell surface expression. Heavily N-glycosylated. Glycosylation is required for protein stability and localization in plasma membrane but not for ligand binding. As to expression, found in all the tissues and cell lines examined. Expression not restricted to IL6 responsive cells. In terms of tissue distribution, expressed in blood serum (at protein level).

Its subcellular location is the cell membrane. It localises to the secreted. Functionally, signal-transducing molecule. The receptor systems for IL6, LIF, OSM, CNTF, IL11, CTF1 and BSF3 can utilize IL6ST for initiating signal transmission. Binding of IL6 to IL6R induces IL6ST homodimerization and formation of a high-affinity receptor complex, which activates the intracellular JAK-MAPK and JAK-STAT3 signaling pathways. That causes phosphorylation of IL6ST tyrosine residues which in turn activates STAT3. In parallel, the IL6 signaling pathway induces the expression of two cytokine receptor signaling inhibitors, SOCS1 and SOCS3, which inhibit JAK and terminate the activity of the IL6 signaling pathway as a negative feedback loop. Also activates the yes-associated protein 1 (YAP) and NOTCH pathways to control inflammation-induced epithelial regeneration, independently of STAT3. Acts as a receptor for the neuroprotective peptide humanin as part of a complex with IL27RA/WSX1 and CNTFR. Mediates signals which regulate immune response, hematopoiesis, pain control and bone metabolism. Has a role in embryonic development. Essential for survival of motor and sensory neurons and for differentiation of astrocytes. Required for expression of TRPA1 in nociceptive neurons. Required for the maintenance of PTH1R expression in the osteoblast lineage and for the stimulation of PTH-induced osteoblast differentiation. Required for normal trabecular bone mass and cortical bone composition. Its function is as follows. Binds to the soluble IL6:sIL6R complex (hyper-IL6), thereby blocking IL6 trans-signaling. Inhibits sIL6R-dependent acute phase response. Also blocks IL11 cluster signaling through IL11R. This is Interleukin-6 receptor subunit beta from Homo sapiens (Human).